The following is a 345-amino-acid chain: Phosphoribosylformylglycinamidine cyclo-ligase (345 aa).

This sequence belongs to the AIR synthase family.

The protein resides in the cytoplasm. It carries out the reaction 2-formamido-N(1)-(5-O-phospho-beta-D-ribosyl)acetamidine + ATP = 5-amino-1-(5-phospho-beta-D-ribosyl)imidazole + ADP + phosphate + H(+). It participates in purine metabolism; IMP biosynthesis via de novo pathway; 5-amino-1-(5-phospho-D-ribosyl)imidazole from N(2)-formyl-N(1)-(5-phospho-D-ribosyl)glycinamide: step 2/2. The sequence is that of Phosphoribosylformylglycinamidine cyclo-ligase from Shewanella putrefaciens (strain CN-32 / ATCC BAA-453).